Here is a 117-residue protein sequence, read N- to C-terminus: Large ribosomal subunit protein bL20 (117 aa).

Belongs to the bacterial ribosomal protein bL20 family.

Functionally, binds directly to 23S ribosomal RNA and is necessary for the in vitro assembly process of the 50S ribosomal subunit. It is not involved in the protein synthesizing functions of that subunit. In Photobacterium profundum (strain SS9), this protein is Large ribosomal subunit protein bL20.